Consider the following 751-residue polypeptide: Translation initiation factor IF-2, chloroplastic (751 aa).

Residues 86–156 (KKEKSKFRKD…KSKKQTSAKN (71 aa)) form a disordered region. Residues 93 to 106 (RKDEDYDSLKREDN) are compositionally biased toward basic and acidic residues. Over residues 129–143 (VSNTNTLNKKNVVKS) the composition is skewed to low complexity. A tr-type G domain is found at 250-423 (KRPPVIAIMG…ILVSEIEDLK (174 aa)). The segment at 259 to 266 (GHVDHGKT) is G1. GTP is bound at residue 259 to 266 (GHVDHGKT). Residues 284 to 288 (GITQK) are G2. Positions 309 to 312 (DTPG) are G3. GTP contacts are provided by residues 309–313 (DTPGH) and 363–366 (NKID). The segment at 363-366 (NKID) is G4. The segment at 399–401 (SAM) is G5.

Belongs to the TRAFAC class translation factor GTPase superfamily. Classic translation factor GTPase family. IF-2 subfamily.

It localises to the plastid. The protein localises to the chloroplast. Functionally, one of the essential components for the initiation of protein synthesis. Protects formylmethionyl-tRNA from spontaneous hydrolysis and promotes its binding to the 30S ribosomal subunits. Also involved in the hydrolysis of GTP during the formation of the 70S ribosomal complex. The polypeptide is Translation initiation factor IF-2, chloroplastic (infB) (Rhodomonas salina (Cryptomonas salina)).